Consider the following 93-residue polypeptide: MAKTAAALHILVKEEKLALDLLEQIKNGADFGKLAKKHSICPSGKRGGDLGEFRQGQMVPAFDKVVFSCPVLEPTGPLHTQFGYHIIKVLYRN.

The 90-residue stretch at 2 to 91 folds into the PpiC domain; it reads AKTAAALHIL…FGYHIIKVLY (90 aa).

This sequence belongs to the PpiC/parvulin rotamase family.

The protein localises to the cytoplasm. The catalysed reaction is [protein]-peptidylproline (omega=180) = [protein]-peptidylproline (omega=0). Its activity is regulated as follows. Not inhibited by cyclosporin A or FK506. PPIases accelerate the folding of proteins. It prefers amino acid residues with hydrophobic side chains like leucine and phenylalanine in the P1 position of the peptides substrates. This is Peptidyl-prolyl cis-trans isomerase C (ppiC) from Escherichia coli (strain K12).